The primary structure comprises 224 residues: Synaptogyrin-2 (224 aa).

Methionine 1 is subject to N-acetylmethionine. Residue serine 3 is modified to Phosphoserine. In terms of domain architecture, MARVEL spans 20–171 (FLTQPQVVAR…LASLAYQRYK (152 aa)). 4 consecutive transmembrane segments (helical) span residues 26–46 (VVAR…IYGE), 73–93 (AIGV…AYFP), 105–125 (VIGD…GFCF), and 147–167 (AAIT…SLAY).

Belongs to the synaptogyrin family. (Microbial infection) Interacts with SFTS phlebovirus protein NSs; may be involved in virus replication. Post-translationally, may be tyrosine phosphorylated by Src. As to expression, ubiquitous; low expression in brain.

It localises to the cytoplasmic vesicle membrane. It is found in the cytoplasmic vesicle. The protein localises to the secretory vesicle. The protein resides in the synaptic vesicle membrane. Its subcellular location is the lipid droplet. Functionally, may play a role in regulated exocytosis. In neuronal cells, modulates the localization of synaptophysin/SYP into synaptic-like microvesicles and may therefore play a role in the formation and/or the maturation of this vesicles. May also play a role in GLUT4 storage and transport to the plasma membrane. (Microbial infection) May play a role in the assembly of cytoplasmic inclusion bodies required for SFTS phlebovirus replication. This is Synaptogyrin-2 from Homo sapiens (Human).